Consider the following 358-residue polypeptide: Pseudouridylate synthase RPUSD4, mitochondrial (358 aa).

The N-terminal 12 residues, 1 to 12 (MRHAREVTFARL), are a transit peptide targeting the mitochondrion.

It belongs to the pseudouridine synthase RluA family.

The protein localises to the mitochondrion matrix. Its subcellular location is the nucleus. It localises to the cytoplasm. The catalysed reaction is uridine in 5S rRNA = pseudouridine in 5S rRNA. The enzyme catalyses a uridine in tRNA = a pseudouridine in tRNA. It carries out the reaction a uridine in mRNA = a pseudouridine in mRNA. Functionally, catalyzes uridine to pseudouridine isomerization (pseudouridylation) of different mitochondrial RNA substrates. Acts on position 1397 in 16S mitochondrial ribosomal RNA (16S mt-rRNA). This modification is required for the assembly of 16S mt-rRNA into a functional mitochondrial ribosome. Acts on position 39 in mitochondrial tRNA(Phe). Also catalyzes pseudouridylation of mRNAs in nucleus: acts as a regulator of pre-mRNA splicing by mediating pseudouridylation of pre-mRNAs at locations associated with alternatively spliced regions. Pseudouridylation of pre-mRNAs near splice sites directly regulates mRNA splicing and mRNA 3'-end processing. This chain is Pseudouridylate synthase RPUSD4, mitochondrial, found in Danio rerio (Zebrafish).